The sequence spans 188 residues: NADH-quinone oxidoreductase subunit I (188 aa).

4Fe-4S ferredoxin-type domains follow at residues 44–74 (LNRY…VEGA) and 90–119 (QVYQ…MTNE). [4Fe-4S] cluster is bound by residues Cys-54, Cys-57, Cys-60, Cys-64, Cys-99, Cys-102, Cys-105, and Cys-109. The interval 167–188 (TGGAAAAAQDESEVDDTAGDRP) is disordered. Residues 176 to 188 (DESEVDDTAGDRP) show a composition bias toward acidic residues.

The protein belongs to the complex I 23 kDa subunit family. In terms of assembly, NDH-1 is composed of 14 different subunits. Subunits NuoA, H, J, K, L, M, N constitute the membrane sector of the complex. The cofactor is [4Fe-4S] cluster.

Its subcellular location is the cell membrane. The catalysed reaction is a quinone + NADH + 5 H(+)(in) = a quinol + NAD(+) + 4 H(+)(out). Its function is as follows. NDH-1 shuttles electrons from NADH, via FMN and iron-sulfur (Fe-S) centers, to quinones in the respiratory chain. The immediate electron acceptor for the enzyme in this species is believed to be ubiquinone. Couples the redox reaction to proton translocation (for every two electrons transferred, four hydrogen ions are translocated across the cytoplasmic membrane), and thus conserves the redox energy in a proton gradient. The polypeptide is NADH-quinone oxidoreductase subunit I (Rhodococcus jostii (strain RHA1)).